We begin with the raw amino-acid sequence, 603 residues long: Dual specificity protein phosphatase CDC14A (603 aa).

The a stretch occupies residues 7-162; it reads ELIGACEFMK…GLQHGFFDFE (156 aa). The segment at 163-176 is linker; it reads TFDAEEYEHYERVE. The tract at residues 177-343 is b; that stretch reads NGDFNWIVPG…QGDIFRSKLK (167 aa). Residues 179-336 form the Tyrosine-protein phosphatase domain; that stretch reads DFNWIVPGKF…KQASLWVQGD (158 aa). Cys278 functions as the Phosphocysteine intermediate in the catalytic mechanism. The residue at position 484 (Ser484) is a Phosphoserine. Positions 518-538 are enriched in polar residues; it reads NGSTQTPGRNYPELNNNQYTR. The tract at residues 518–583 is disordered; sequence NGSTQTPGRN…RPSFPGSLSS (66 aa). Composition is skewed to low complexity over residues 539-558 and 573-583; these read SSNSNSSSSSSGLGGNLNSS and LRPSFPGSLSS. Position 592 is a phosphoserine (Ser592).

It belongs to the protein-tyrosine phosphatase family. Non-receptor class CDC14 subfamily. As to quaternary structure, interacts with KIF20A. Interaction is required to localize CDC14 to the midzone of the mitotic spindle. Expressed in the inner ear.

The protein localises to the nucleus. The protein resides in the cytoplasm. It localises to the cytoskeleton. Its subcellular location is the microtubule organizing center. It is found in the centrosome. The protein localises to the spindle. The protein resides in the cell projection. It localises to the kinocilium. Its subcellular location is the spindle pole. It is found in the stereocilium. It catalyses the reaction O-phospho-L-tyrosyl-[protein] + H2O = L-tyrosyl-[protein] + phosphate. It carries out the reaction O-phospho-L-seryl-[protein] + H2O = L-seryl-[protein] + phosphate. The enzyme catalyses O-phospho-L-threonyl-[protein] + H2O = L-threonyl-[protein] + phosphate. Its function is as follows. Dual-specificity phosphatase. Required for centrosome separation and productive cytokinesis during cell division. Dephosphorylates SIRT2 around early anaphase. May dephosphorylate the APC subunit FZR1/CDH1, thereby promoting APC-FZR1 dependent degradation of mitotic cyclins and subsequent exit from mitosis. Required for normal hearing. This is Dual specificity protein phosphatase CDC14A (Cdc14a) from Mus musculus (Mouse).